The primary structure comprises 132 residues: Histone H2A (132 aa).

The span at 1 to 13 (MSAKGKTGRKKAS) shows a compositional bias: basic residues. The tract at residues 1-21 (MSAKGKTGRKKASKGTSNSAK) is disordered.

It belongs to the histone H2A family. In terms of assembly, the nucleosome is a histone octamer containing two molecules each of H2A, H2B, H3 and H4 assembled in one H3-H4 heterotetramer and two H2A-H2B heterodimers. The octamer wraps approximately 147 bp of DNA.

It localises to the nucleus. It is found in the chromosome. Its function is as follows. Core component of nucleosome. Nucleosomes wrap and compact DNA into chromatin, limiting DNA accessibility to the cellular machineries which require DNA as a template. Histones thereby play a central role in transcription regulation, DNA repair, DNA replication and chromosomal stability. DNA accessibility is regulated via a complex set of post-translational modifications of histones, also called histone code, and nucleosome remodeling. This Plasmodium falciparum protein is Histone H2A.